The following is a 382-amino-acid chain: Galactokinase (382 aa).

Substrate is bound at residue 34–37 (EHTD). 124 to 130 (GAGLSSS) is an ATP binding site. Residues Ser130 and Glu162 each contribute to the Mg(2+) site. Asp174 acts as the Proton acceptor in catalysis. A substrate-binding site is contributed by Tyr223.

Belongs to the GHMP kinase family. GalK subfamily.

It is found in the cytoplasm. It catalyses the reaction alpha-D-galactose + ATP = alpha-D-galactose 1-phosphate + ADP + H(+). Its pathway is carbohydrate metabolism; galactose metabolism. Its function is as follows. Catalyzes the transfer of the gamma-phosphate of ATP to D-galactose to form alpha-D-galactose-1-phosphate (Gal-1-P). This chain is Galactokinase, found in Shigella flexneri serotype 5b (strain 8401).